The chain runs to 108 residues: Circadian clock oscillator protein KaiB (108 aa).

It belongs to the KaiB family. Undergoes a major conformational rearrangment; in the free state forms homotetramers with 2 dimers. When bound to the CI domain of KaiC, KaiA or CikA switches to a monomeric thioredoxin-fold (KaiB(fs)). The KaiABC complex composition changes during the circadian cycle to control KaiC phosphorylation. Complexes KaiC(6), KaiA(2-4):KaiC(6), KaiB(6):KaiC(6) and KaiC(6):KaiB(6):KaiA(12) are among the most important forms, many form cooperatively. Binds to KaiA; 1 KaiB(fs) binds to the KaiA homodimer. Binds to the B-loop in the CI domain of KaiC; SasA and KaiB compete to bind to the CI domain. Binding to KaiC CI domain occurs 1:1. KaiA and CikA bind to the same region of KaiB(fs) and therefore compete.

In terms of biological role, key component of the KaiABC oscillator complex, which constitutes the main circadian regulator in cyanobacteria. Its composition changes during the circadian cycle to control KaiC phosphorylation. KaiA stimulates KaiC autophosphorylation, while KaiB sequesters KaiA, leading to KaiC autodephosphorylation. KaiA binding to KaiC yields KaiA(2-4):KaiC(6) complexes which stimulate KaiC autophosphorylation. Phospho-Ser-431 KaiC accumulation triggers binding of KaiB to form the KaiB(6):KaiC(6) complex, leading to changes in the output regulators CikA and SasA. KaiB switches to a thioredoxin-like fold (KaiB(fs)) in complex with KaiC. KaiB(6):KaiC(6) formation exposes a site for KaiA binding that sequesters KaiA from the CII domain, making the KaiC(6):KaiB(6):KaiA(12) complex that results in KaiC autodephosphorylation. Complete dephosphorylation of KaiC leads to dissociation of KaiA(2):KaiB(1), completing 1 cycle of the Kai oscillator. Functionally, a metamorphic protein which reversibly switches between an inactive tetrameric fold and a rare, thioredoxin-like monomeric fold (KaiB(fs)). KaiB(fs) binds phospho-KaiC, KaiA and CikA. KaiA and CikA compete for binding to KaiB(fs), and KaiB(fs) and SasA compete for binding to KaiC, thus the clock oscillator and output signal pathway are tightly coupled. The chain is Circadian clock oscillator protein KaiB from Thermosynechococcus vestitus (strain NIES-2133 / IAM M-273 / BP-1).